The following is a 363-amino-acid chain: Membrane-bound lytic murein transglycosylase C (363 aa).

An N-terminal signal peptide occupies residues 1-15 (MKKYIVFAIIPFLFA). Cysteine 16 carries the N-palmitoyl cysteine lipid modification. Cysteine 16 carries the S-diacylglycerol cysteine lipid modification.

The protein belongs to the transglycosylase Slt family.

The protein resides in the cell outer membrane. It carries out the reaction Exolytic cleavage of the (1-&gt;4)-beta-glycosidic linkage between N-acetylmuramic acid (MurNAc) and N-acetylglucosamine (GlcNAc) residues in peptidoglycan, from either the reducing or the non-reducing ends of the peptidoglycan chains, with concomitant formation of a 1,6-anhydrobond in the MurNAc residue.. Its function is as follows. Murein-degrading enzyme. May play a role in recycling of muropeptides during cell elongation and/or cell division. In Histophilus somni (strain 129Pt) (Haemophilus somnus), this protein is Membrane-bound lytic murein transglycosylase C.